Here is a 291-residue protein sequence, read N- to C-terminus: Light-independent protochlorophyllide reductase iron-sulfur ATP-binding protein (291 aa).

Residues 10–15 (GIGKST) and Lys-39 each bind ATP. A Mg(2+)-binding site is contributed by Ser-14. [4Fe-4S] cluster is bound by residues Cys-95 and Cys-129. 180–181 (NR) lines the ATP pocket.

Belongs to the NifH/BchL/ChlL family. As to quaternary structure, homodimer. Protochlorophyllide reductase is composed of three subunits; ChlL, ChlN and ChlB. [4Fe-4S] cluster serves as cofactor.

The protein localises to the plastid. The protein resides in the chloroplast. It catalyses the reaction chlorophyllide a + oxidized 2[4Fe-4S]-[ferredoxin] + 2 ADP + 2 phosphate = protochlorophyllide a + reduced 2[4Fe-4S]-[ferredoxin] + 2 ATP + 2 H2O. The protein operates within porphyrin-containing compound metabolism; chlorophyll biosynthesis (light-independent). Functionally, component of the dark-operative protochlorophyllide reductase (DPOR) that uses Mg-ATP and reduced ferredoxin to reduce ring D of protochlorophyllide (Pchlide) to form chlorophyllide a (Chlide). This reaction is light-independent. The L component serves as a unique electron donor to the NB-component of the complex, and binds Mg-ATP. The chain is Light-independent protochlorophyllide reductase iron-sulfur ATP-binding protein from Pinus koraiensis (Korean pine).